A 450-amino-acid chain; its full sequence is Phosphoglucosamine mutase (450 aa).

Residue Ser102 is the Phosphoserine intermediate of the active site. Positions 102, 244, 246, and 248 each coordinate Mg(2+). Residue Ser102 is modified to Phosphoserine.

This sequence belongs to the phosphohexose mutase family. Mg(2+) serves as cofactor. Activated by phosphorylation.

The catalysed reaction is alpha-D-glucosamine 1-phosphate = D-glucosamine 6-phosphate. Functionally, catalyzes the conversion of glucosamine-6-phosphate to glucosamine-1-phosphate. The polypeptide is Phosphoglucosamine mutase (Syntrophomonas wolfei subsp. wolfei (strain DSM 2245B / Goettingen)).